A 959-amino-acid polypeptide reads, in one-letter code: Glycine dehydrogenase (decarboxylating) (959 aa).

An N6-(pyridoxal phosphate)lysine modification is found at Lys-708.

The protein belongs to the GcvP family. As to quaternary structure, the glycine cleavage system is composed of four proteins: P, T, L and H. It depends on pyridoxal 5'-phosphate as a cofactor.

The enzyme catalyses N(6)-[(R)-lipoyl]-L-lysyl-[glycine-cleavage complex H protein] + glycine + H(+) = N(6)-[(R)-S(8)-aminomethyldihydrolipoyl]-L-lysyl-[glycine-cleavage complex H protein] + CO2. In terms of biological role, the glycine cleavage system catalyzes the degradation of glycine. The P protein binds the alpha-amino group of glycine through its pyridoxal phosphate cofactor; CO(2) is released and the remaining methylamine moiety is then transferred to the lipoamide cofactor of the H protein. This is Glycine dehydrogenase (decarboxylating) from Yersinia enterocolitica serotype O:8 / biotype 1B (strain NCTC 13174 / 8081).